Consider the following 261-residue polypeptide: Putative imidazole glycerol phosphate synthase subunit hisF2 (261 aa).

The active site involves Asp138.

Belongs to the HisA/HisF family. In terms of assembly, heterodimer of HisH and HisF.

Its subcellular location is the cytoplasm. It catalyses the reaction 5-[(5-phospho-1-deoxy-D-ribulos-1-ylimino)methylamino]-1-(5-phospho-beta-D-ribosyl)imidazole-4-carboxamide + L-glutamine = D-erythro-1-(imidazol-4-yl)glycerol 3-phosphate + 5-amino-1-(5-phospho-beta-D-ribosyl)imidazole-4-carboxamide + L-glutamate + H(+). It functions in the pathway amino-acid biosynthesis; L-histidine biosynthesis; L-histidine from 5-phospho-alpha-D-ribose 1-diphosphate: step 5/9. In terms of biological role, IGPS catalyzes the conversion of PRFAR and glutamine to IGP, AICAR and glutamate. The HisF subunit catalyzes the cyclization activity that produces IGP and AICAR from PRFAR using the ammonia provided by the HisH subunit. The chain is Putative imidazole glycerol phosphate synthase subunit hisF2 (hisF2) from Prochlorococcus marinus (strain MIT 9313).